We begin with the raw amino-acid sequence, 162 residues long: MTDQPNNDAVANEENGPQFSLQRIYVRDLSFEAPKSPAIFRQEWTPTVSLDLNTRQKQLEGDFYEVVLTLSVTVNNGDEVAFIVEVQQAGIFLIKGLDDGAMSHTLGAFCPNILFPYAREAIDNLVVRGSFPALMLAPVNFDALYAQELQRMQEAGETPTVQ.

It belongs to the SecB family. As to quaternary structure, homotetramer, a dimer of dimers. One homotetramer interacts with 1 SecA dimer.

The protein resides in the cytoplasm. In terms of biological role, one of the proteins required for the normal export of preproteins out of the cell cytoplasm. It is a molecular chaperone that binds to a subset of precursor proteins, maintaining them in a translocation-competent state. It also specifically binds to its receptor SecA. The chain is Protein-export protein SecB from Pseudomonas syringae pv. syringae (strain B728a).